Consider the following 710-residue polypeptide: MPVRRYGGRYNNSSSGVSNALSSSSTAGLRPSPSSRENSTPLSTHHDPAFLSTNHAKNEGGLCQKHHVRFREPSVEVEVEIMDDEPSRGLQKPPSRARHAADANNNSASAQCNTTRTSDYTFYTNEDQKKVYEALRSLRPLPELQEPRRVKEYSEVSIKESLYRIVEAHDVIMVAGAFFGDEGKGKTVDAVAHHPLCTCIARVNSGENAGHTVYDKAGRKFVFNLAPSGLLLPGKRNYIGPECVMDPVSFMEKEIIQLISAGIDYHDRLFIGNVCIVTPYHKLLDLLGSAANSSTLKGMAPVHGSKVMKRGIRLDHIFNDDETLRKRLEKDMETYLGLLKVKNLSDADVVRLCREENSDGVLRVPDYVIAFAQAKEKVKFLMNLYHDRVRNNPDFPARCDVIYELRAAVLRGEKVLLEGPQSYWLSNARTKFWESTTSADTTAAGLLAASQLNFQQFKSVVLNVHKAPGSSRVGIGACPSSFVPQDFFSAQNIKTLHDLPPATCANFEAIQRTLFRDGFPYSNDKAKHNGIMAPVEYSDETGDYNIGVAMAIASAQHHGECGAVTKKPRVCGFFDCVLQHEVNSIQGPYLTISALDRGDEYDKVGVTIAYVYYNPEGKQVNVNGHVYKNGDIIRAGDPVPSESALYHCHPIVKLIDGWRDNPIAAAKRRRNTPLPRGLCELLSTIEYFTNCKVLSIGNGPNGDDIIYLRQ.

Disordered regions lie at residues 1-57 (MPVR…NHAK) and 82-112 (MDDE…SAQC). Over residues 11 to 25 (NNSSSGVSNALSSSS) the composition is skewed to low complexity. The span at 32-43 (SPSSRENSTPLS) shows a compositional bias: polar residues. GTP is bound by residues 180–186 (GDEGKGK) and 210–212 (GHT). Asp-181 functions as the Proton acceptor in the catalytic mechanism. Residues Asp-181 and Gly-210 each contribute to the Mg(2+) site. IMP-binding positions include 181–184 (DEGK), 208–211 (NAGH), Thr-295, Lys-309, Gln-421, Thr-437, and Lys-567. His-211 acts as the Proton donor in catalysis. 563–569 (AVTKKPR) lines the substrate pocket. Residues Arg-569 and 697 to 699 (GNG) each bind GTP.

Belongs to the adenylosuccinate synthetase family. Homodimer. The cofactor is Mg(2+).

Its subcellular location is the cytoplasm. The enzyme catalyses IMP + L-aspartate + GTP = N(6)-(1,2-dicarboxyethyl)-AMP + GDP + phosphate + 2 H(+). It participates in purine metabolism; AMP biosynthesis via de novo pathway; AMP from IMP: step 1/2. Its function is as follows. Plays an important role in the salvage pathway for purine nucleotide biosynthesis. Catalyzes the first committed step in the biosynthesis of AMP from IMP. The chain is Adenylosuccinate synthetase from Leishmania braziliensis.